Consider the following 425-residue polypeptide: Protein CLP1 homolog (425 aa).

Residues E18, K59, and 121 to 126 (DVGKST) each bind ATP.

Belongs to the Clp1 family. Clp1 subfamily.

Its subcellular location is the nucleus. Its function is as follows. Required for endonucleolytic cleavage during polyadenylation-dependent pre-mRNA 3'-end formation. The protein is Protein CLP1 homolog (cbc) of Drosophila ananassae (Fruit fly).